Reading from the N-terminus, the 339-residue chain is Phenylalanine--tRNA ligase alpha subunit (339 aa).

Mg(2+) is bound at residue E250.

It belongs to the class-II aminoacyl-tRNA synthetase family. Phe-tRNA synthetase alpha subunit type 1 subfamily. As to quaternary structure, tetramer of two alpha and two beta subunits. Requires Mg(2+) as cofactor.

The protein localises to the cytoplasm. It catalyses the reaction tRNA(Phe) + L-phenylalanine + ATP = L-phenylalanyl-tRNA(Phe) + AMP + diphosphate + H(+). This chain is Phenylalanine--tRNA ligase alpha subunit, found in Flavobacterium johnsoniae (strain ATCC 17061 / DSM 2064 / JCM 8514 / BCRC 14874 / CCUG 350202 / NBRC 14942 / NCIMB 11054 / UW101) (Cytophaga johnsonae).